The chain runs to 41 residues: Large ribosomal subunit protein bL36 (41 aa).

The protein belongs to the bacterial ribosomal protein bL36 family.

This is Large ribosomal subunit protein bL36 from Xanthobacter autotrophicus (strain ATCC BAA-1158 / Py2).